The chain runs to 37 residues: MKIRASVRKICTKCRLIRRRGRIRVICSNPKHKQRQG.

It belongs to the bacterial ribosomal protein bL36 family.

The protein resides in the plastid. It is found in the chloroplast. This chain is Large ribosomal subunit protein bL36c, found in Lolium perenne (Perennial ryegrass).